The following is a 357-amino-acid chain: tRNA-specific 2-thiouridylase MnmA (357 aa).

Residues 6 to 13 and L32 contribute to the ATP site; that span reads AMSGGVDS. C101 (nucleophile) is an active-site residue. A disulfide bridge connects residues C101 and C193. An ATP-binding site is contributed by G125. The tract at residues 143-145 is interaction with tRNA; that stretch reads KDQ. The Cysteine persulfide intermediate role is filled by C193.

Belongs to the MnmA/TRMU family.

The protein localises to the cytoplasm. The enzyme catalyses S-sulfanyl-L-cysteinyl-[protein] + uridine(34) in tRNA + AH2 + ATP = 2-thiouridine(34) in tRNA + L-cysteinyl-[protein] + A + AMP + diphosphate + H(+). Its function is as follows. Catalyzes the 2-thiolation of uridine at the wobble position (U34) of tRNA, leading to the formation of s(2)U34. This Mycolicibacterium vanbaalenii (strain DSM 7251 / JCM 13017 / BCRC 16820 / KCTC 9966 / NRRL B-24157 / PYR-1) (Mycobacterium vanbaalenii) protein is tRNA-specific 2-thiouridylase MnmA.